The sequence spans 200 residues: uncharacterized protein (200 aa).

This is an uncharacterized protein from Saccharomyces cerevisiae (strain ATCC 204508 / S288c) (Baker's yeast).